A 217-amino-acid polypeptide reads, in one-letter code: Adenylate kinase (217 aa).

Position 10–15 (10–15 (GAGKGT)) interacts with ATP. Positions 30-59 (STGEILRAAVKSKTPMGVKAKEYMDQGALV) are NMP. AMP-binding positions include Thr31, Arg36, 57-59 (ALV), 85-88 (GFPR), and Gln92. The segment at 126–163 (GRRVCRACGRAFHVKFDPPLVDGVCDACGGELYQRDDD) is LID. Arg127 serves as a coordination point for ATP. Zn(2+) contacts are provided by Cys130, Cys133, Cys150, and Cys153. Residues Arg160 and Arg171 each contribute to the AMP site. ATP is bound at residue Glu199.

It belongs to the adenylate kinase family. As to quaternary structure, monomer.

It is found in the cytoplasm. The enzyme catalyses AMP + ATP = 2 ADP. Its pathway is purine metabolism; AMP biosynthesis via salvage pathway; AMP from ADP: step 1/1. Its function is as follows. Catalyzes the reversible transfer of the terminal phosphate group between ATP and AMP. Plays an important role in cellular energy homeostasis and in adenine nucleotide metabolism. This chain is Adenylate kinase, found in Geobacter sulfurreducens (strain ATCC 51573 / DSM 12127 / PCA).